A 729-amino-acid chain; its full sequence is Fatty acid oxidation complex subunit alpha (729 aa).

The interval 1–189 (MLYKGDTLYL…KIGLVDGVVK (189 aa)) is enoyl-CoA hydratase/isomerase. Residue Asp296 participates in substrate binding. The segment at 311–729 (ETPKQAAVLG…ARPVGSLKTA (419 aa)) is 3-hydroxyacyl-CoA dehydrogenase. NAD(+) contacts are provided by residues Met324, Asp343, 400–402 (VVE), Lys407, and Ser429. The For 3-hydroxyacyl-CoA dehydrogenase activity role is filled by His450. Residue Asn453 participates in NAD(+) binding. Positions 500 and 660 each coordinate substrate. Residues 708–729 (RHNEPYYPPVEPARPVGSLKTA) form a disordered region.

This sequence in the N-terminal section; belongs to the enoyl-CoA hydratase/isomerase family. The protein in the C-terminal section; belongs to the 3-hydroxyacyl-CoA dehydrogenase family. In terms of assembly, heterotetramer of two alpha chains (FadB) and two beta chains (FadA).

The enzyme catalyses a (3S)-3-hydroxyacyl-CoA + NAD(+) = a 3-oxoacyl-CoA + NADH + H(+). The catalysed reaction is a (3S)-3-hydroxyacyl-CoA = a (2E)-enoyl-CoA + H2O. It catalyses the reaction a 4-saturated-(3S)-3-hydroxyacyl-CoA = a (3E)-enoyl-CoA + H2O. It carries out the reaction (3S)-3-hydroxybutanoyl-CoA = (3R)-3-hydroxybutanoyl-CoA. The enzyme catalyses a (3Z)-enoyl-CoA = a 4-saturated (2E)-enoyl-CoA. The catalysed reaction is a (3E)-enoyl-CoA = a 4-saturated (2E)-enoyl-CoA. It participates in lipid metabolism; fatty acid beta-oxidation. Involved in the aerobic and anaerobic degradation of long-chain fatty acids via beta-oxidation cycle. Catalyzes the formation of 3-oxoacyl-CoA from enoyl-CoA via L-3-hydroxyacyl-CoA. It can also use D-3-hydroxyacyl-CoA and cis-3-enoyl-CoA as substrate. The polypeptide is Fatty acid oxidation complex subunit alpha (Salmonella schwarzengrund (strain CVM19633)).